The sequence spans 812 residues: ATP-dependent DNA helicase PIF3 (812 aa).

247-254 (GSAGTGKT) is an ATP binding site. A DNA-binding region spans residues 741–761 (HLVYVACSRVRSMDQLIVRNV).

This sequence belongs to the helicase family. PIF1 subfamily. As to quaternary structure, monomer. It depends on Mg(2+) as a cofactor.

It localises to the cytoplasm. It catalyses the reaction Couples ATP hydrolysis with the unwinding of duplex DNA at the replication fork by translocating in the 5'-3' direction. This creates two antiparallel DNA single strands (ssDNA). The leading ssDNA polymer is the template for DNA polymerase III holoenzyme which synthesizes a continuous strand.. The enzyme catalyses ATP + H2O = ADP + phosphate + H(+). DNA-dependent ATPase and 5'-3' DNA helicase required for the maintenance of genome stability. This chain is ATP-dependent DNA helicase PIF3, found in Trypanosoma brucei brucei (strain 927/4 GUTat10.1).